The chain runs to 285 residues: Sulfotransferase 2A1 (285 aa).

6 residues coordinate 3'-phosphoadenylyl sulfate: lysine 44, serine 45, glycine 46, threonine 47, asparagine 48, and tryptophan 49. The Proton acceptor role is filled by histidine 99. The 3'-phosphoadenylyl sulfate site is built by arginine 121, serine 129, tyrosine 184, serine 218, methionine 223, arginine 247, lysine 248, and glycine 249. Position 251 is a phosphoserine (serine 251).

The protein belongs to the sulfotransferase 1 family. As to quaternary structure, homodimer. In terms of processing, the N-terminus is blocked. As to expression, liver, adrenal and at lower level in the kidney. Is present in human fetus in higher level in the adrenal than the liver and the kidney.

The protein localises to the cytoplasm. The catalysed reaction is an alcohol + 3'-phosphoadenylyl sulfate = an alkyl sulfate + adenosine 3',5'-bisphosphate + H(+). It carries out the reaction (24S)-hydroxycholesterol + 3'-phosphoadenylyl sulfate = (24S)-hydroxycholesterol 24-sulfate + adenosine 3',5'-bisphosphate + H(+). The enzyme catalyses (24S)-hydroxycholesterol + 3'-phosphoadenylyl sulfate = (24S)-hydroxycholesterol 3-sulfate + adenosine 3',5'-bisphosphate + H(+). It catalyses the reaction (24S)-hydroxycholesterol 24-sulfate + 3'-phosphoadenylyl sulfate = (24S)-hydroxycholesterol 3,24-disulfate + adenosine 3',5'-bisphosphate + H(+). The catalysed reaction is 3beta-hydroxyandrost-5-en-17-one + 3'-phosphoadenylyl sulfate = dehydroepiandrosterone 3-sulfate + adenosine 3',5'-bisphosphate + H(+). It carries out the reaction pregnenolone + 3'-phosphoadenylyl sulfate = pregnenolone sulfate + adenosine 3',5'-bisphosphate + H(+). The enzyme catalyses androsterone + 3'-phosphoadenylyl sulfate = androsterone 3alpha-sulfate + adenosine 3',5'-bisphosphate + H(+). It catalyses the reaction taurolithocholate + 3'-phosphoadenylyl sulfate = taurolithocholate 3-sulfate + adenosine 3',5'-bisphosphate + H(+). The catalysed reaction is lithocholate + 3'-phosphoadenylyl sulfate = lithocholate sulfate + adenosine 3',5'-bisphosphate + H(+). With respect to regulation, subject to substrate inhibition. Alternate orientations for binding of steroid substrates to SULT2A1 may play a role in substrate inhibition. Functionally, sulfotransferase that utilizes 3'-phospho-5'-adenylyl sulfate (PAPS) as sulfonate donor to catalyze the sulfonation of steroids and bile acids in the liver and adrenal glands. Mediates the sulfation of a wide range of steroids and sterols, including pregnenolone, androsterone, DHEA, bile acids, cholesterol and as well many xenobiotics that contain alcohol and phenol functional groups. Sulfonation increases the water solubility of most compounds, and therefore their renal excretion, but it can also result in bioactivation to form active metabolites. Plays an important role in maintening steroid and lipid homeostasis. Plays a key role in bile acid metabolism. In addition, catalyzes the metabolic activation of potent carcinogenic polycyclic arylmethanols. The chain is Sulfotransferase 2A1 (SULT2A1) from Homo sapiens (Human).